The sequence spans 501 residues: Probable pectate lyase 13 (501 aa).

The N-terminal stretch at 1-22 (MLLQNFSNTIFLLCLFFTLLSA) is a signal peptide. Asn-27 and Asn-49 each carry an N-linked (GlcNAc...) asparagine glycan. Residues 55-78 (RQLSSPSSSSSSSSSSSSSSCRTG) form a disordered region. The span at 58–74 (SSPSSSSSSSSSSSSSS) shows a compositional bias: low complexity. Asp-217, Asp-241, and Asp-245 together coordinate Ca(2+). Residue Arg-297 is part of the active site. 2 disordered regions span residues 329 to 359 (INSQGNRYSAPSDPSAKEVTKRVDSKDDGEW) and 408 to 463 (NAGV…SSGD). The span at 343 to 357 (SAKEVTKRVDSKDDG) shows a compositional bias: basic and acidic residues. Gly residues predominate over residues 430-449 (GGDGGGGGSSGGSSGGGMDV). Residues 450-463 (MGGTTRGSSSSSGD) are compositionally biased toward low complexity. Residue Ser-474 is the site of GPI-anchor amidated serine attachment. The propeptide at 475–501 (DAPSRPRLTLLFSLLMISVLSLSTLLL) is removed in mature form.

Belongs to the polysaccharide lyase 1 family. Requires Ca(2+) as cofactor. Expressed equally in mature leaves, buds, flowers, rosettes and roots.

It is found in the cell membrane. The enzyme catalyses Eliminative cleavage of (1-&gt;4)-alpha-D-galacturonan to give oligosaccharides with 4-deoxy-alpha-D-galact-4-enuronosyl groups at their non-reducing ends.. It participates in glycan metabolism; pectin degradation; 2-dehydro-3-deoxy-D-gluconate from pectin: step 2/5. In terms of biological role, susceptibility factor required for infection by most powdery mildews, but not by unrelated pathogens. Exact function not known, but clearly affects cell wall composition. In Arabidopsis thaliana (Mouse-ear cress), this protein is Probable pectate lyase 13 (PMR6).